The primary structure comprises 101 residues: Large ribosomal subunit protein bL21 (101 aa).

The protein belongs to the bacterial ribosomal protein bL21 family. In terms of assembly, part of the 50S ribosomal subunit. Contacts protein L20.

Functionally, this protein binds to 23S rRNA in the presence of protein L20. In Corynebacterium diphtheriae (strain ATCC 700971 / NCTC 13129 / Biotype gravis), this protein is Large ribosomal subunit protein bL21.